A 472-amino-acid polypeptide reads, in one-letter code: Putative F-box/LRR-repeat protein At5g54820 (472 aa).

An F-box domain is found at 6–54; the sequence is QDRLSSLPDILLIMIISFLPLKECVRTSVLSKRWRYLCLETTNLSFKES. LRR repeat units lie at residues 58 to 87, 135 to 164, 183 to 208, 225 to 250, 283 to 308, and 338 to 363; these read NPDI…SITQ, NGDI…KIYG, IGWV…SIKN, VIEH…KYSG, SSRI…TVCP, and MHTK…GFDI.

The protein is Putative F-box/LRR-repeat protein At5g54820 of Arabidopsis thaliana (Mouse-ear cress).